The following is a 70-amino-acid chain: Ribosome modulation factor (70 aa).

This sequence belongs to the ribosome modulation factor family.

The protein resides in the cytoplasm. Functionally, during stationary phase, converts 70S ribosomes to an inactive dimeric form (100S ribosomes). This is Ribosome modulation factor from Marinobacter adhaerens (strain DSM 23420 / HP15).